Here is a 353-residue protein sequence, read N- to C-terminus: Ferredoxin--NADP reductase (353 aa).

Residues T25, E44, Q52, Y57, V97, F132, D298, and S339 each contribute to the FAD site.

Belongs to the ferredoxin--NADP reductase type 2 family. As to quaternary structure, homodimer. FAD is required as a cofactor.

The catalysed reaction is 2 reduced [2Fe-2S]-[ferredoxin] + NADP(+) + H(+) = 2 oxidized [2Fe-2S]-[ferredoxin] + NADPH. This chain is Ferredoxin--NADP reductase, found in Chlorobium chlorochromatii (strain CaD3).